Here is a 244-residue protein sequence, read N- to C-terminus: tRNA (guanine-N(7)-)-methyltransferase (244 aa).

Polar residues predominate over residues 1-10; it reads MSDTPQSPAQ. Residues 1-20 are disordered; it reads MSDTPQSPAQDSLAEHDEAR. S-adenosyl-L-methionine is bound by residues E74, E99, D126, and D149. The active site involves D149. Residues K153, D185, and 222–225 each bind substrate; that span reads TKFE.

Belongs to the class I-like SAM-binding methyltransferase superfamily. TrmB family.

It carries out the reaction guanosine(46) in tRNA + S-adenosyl-L-methionine = N(7)-methylguanosine(46) in tRNA + S-adenosyl-L-homocysteine. It functions in the pathway tRNA modification; N(7)-methylguanine-tRNA biosynthesis. Functionally, catalyzes the formation of N(7)-methylguanine at position 46 (m7G46) in tRNA. The polypeptide is tRNA (guanine-N(7)-)-methyltransferase (Pseudomonas paraeruginosa (strain DSM 24068 / PA7) (Pseudomonas aeruginosa (strain PA7))).